Consider the following 179-residue polypeptide: MNQPNSLYLALLIEAKWQNPEDFHFSSDFAKHWLLEQGSLSRRLARHCQHLTVELMRNEKSGMGQLTRQETQGLSPEICLIREVVLSGDQTPWVLGRTLIPETTLADQPYDLATLGDIPLGLTVFSAEQVERDALQVAWIETPQGRLLARRSRLWMNHKPMLVAELFLPDAPIYSRESV.

The substrate site is built by arginine 82, leucine 120, and glutamate 165.

This sequence belongs to the UbiC family.

Its subcellular location is the cytoplasm. It carries out the reaction chorismate = 4-hydroxybenzoate + pyruvate. It functions in the pathway cofactor biosynthesis; ubiquinone biosynthesis. Its function is as follows. Removes the pyruvyl group from chorismate, with concomitant aromatization of the ring, to provide 4-hydroxybenzoate (4HB) for the ubiquinone pathway. The chain is Probable chorismate pyruvate-lyase from Vibrio vulnificus (strain CMCP6).